A 216-amino-acid chain; its full sequence is MGNCAKTPWHRGSKERWQWPGSPLGGSRPSPGPRTEEQEGTQGYSVLGSLVGPACIFLRPSIAATQLDRELRPEEIEELQIAFQEFDRDRDGYIGYRELGACMRTLGYMPTEMELIEISQQISGGKVDFEDFVELMGPKLLAETADMIGVRELRDAFREFDTNGDGCISVGELRAALKALLGERLSQREVDEILQDIDLNGDGLVDFEEFVRMMSR.

Positions 1 to 41 (MGNCAKTPWHRGSKERWQWPGSPLGGSRPSPGPRTEEQEGT) are disordered. A lipid anchor (N-myristoyl glycine) is attached at Gly-2. The segment covering 20-29 (PGSPLGGSRP) has biased composition (low complexity). 4 EF-hand domains span residues 74-109 (EEIE…LGYM), 125-142 (GKVD…KLLA), 148-183 (IGVR…LLGE), and 185-216 (LSQR…MMSR). Residues Asp-87, Asp-89, Asp-91, Tyr-93, and Glu-98 each contribute to the Ca(2+) site. Ca(2+) contacts are provided by Asp-161, Asn-163, Asp-165, Cys-167, Glu-172, Asp-198, Asn-200, Asp-202, and Glu-209.

As to expression, expressed in the inner hair cells (IHCs), outer hair cells,(OHCs) and vestibular hair cells within the ear and in the retina (at protein level). Expressed in the retinal cone type 6 ON-bipolar cells and type 1 OFF-bipolar cells (at protein level). Expressed in the organ of Corti and spiral ganglion neurons in the cochlea (at protein level).

The protein resides in the cytoplasm. The protein localises to the perinuclear region. Its subcellular location is the cell membrane. It localises to the golgi apparatus. Required for sound encoding at inner hair cells (IHCs) synapses, likely via inhibition of the inactivation of voltage-gated calcium channel of type 1.3 (Cav1.3) in the IHCs. Required for the normal transfer of light signals through the retina. This Mus musculus (Mouse) protein is Calcium-binding protein 2 (Cabp2).